Here is a 123-residue protein sequence, read N- to C-terminus: Small ribosomal subunit protein uS12 (123 aa).

Asp-89 is modified (3-methylthioaspartic acid).

Belongs to the universal ribosomal protein uS12 family. As to quaternary structure, part of the 30S ribosomal subunit. Contacts proteins S8 and S17. May interact with IF1 in the 30S initiation complex.

In terms of biological role, with S4 and S5 plays an important role in translational accuracy. Interacts with and stabilizes bases of the 16S rRNA that are involved in tRNA selection in the A site and with the mRNA backbone. Located at the interface of the 30S and 50S subunits, it traverses the body of the 30S subunit contacting proteins on the other side and probably holding the rRNA structure together. The combined cluster of proteins S8, S12 and S17 appears to hold together the shoulder and platform of the 30S subunit. The protein is Small ribosomal subunit protein uS12 of Anaeromyxobacter sp. (strain Fw109-5).